A 363-amino-acid polypeptide reads, in one-letter code: MSLFKFAAFVLGTAGSVAGHGYVTKIDVDGTTYGGYLVDTYSYEPDPPKLIAWSTTATDTGYVSPSAYGTSDIVCHRGAEPGALSAETLPGGSVTLYWNTWPTDHHGPVITYLANCNGDCASVDKSTLKFFKIDAGGLVDNSAVPGTWATDELIAADFSRTVTIPSDIASGNYVLRHEIIALHSAGNKDGAQNYPQCINLKITGSGTAAPTGTLGTELYKNTDAGIGVNIWNALSSYAIPGPALYTSGSDSNTATSGASPPSTNFSPTTTAAAATTTLSTVVTSAQSTSATVVAEQTSVSYSQTPWPSSTATEATSASSSAGGSNNGHTGTHDEAGHCPAHTGKKRSRLNRRRMASCSSRTQS.

The first 19 residues, Met-1–Gly-19, serve as a signal peptide directing secretion. Cu(2+)-binding residues include His-20 and His-105. 2 disulfide bridges follow: Cys-75–Cys-197 and Cys-116–Cys-120. Residues His-183 and Gln-192 each contribute to the O2 site. Tyr-194 contributes to the Cu(2+) binding site. Polar residues predominate over residues Gly-248–Gly-257. Disordered stretches follow at residues Gly-248 to Thr-270 and Ser-298 to Ser-363. A compositionally biased stretch (low complexity) spans Ala-258–Thr-270. A compositionally biased stretch (polar residues) spans Ser-298–Pro-307. The span at Ser-308–Thr-329 shows a compositional bias: low complexity. A compositionally biased stretch (basic residues) spans Thr-342–Met-354.

The protein belongs to the polysaccharide monooxygenase AA9 family. It depends on Cu(2+) as a cofactor.

Its subcellular location is the secreted. It catalyses the reaction [(1-&gt;4)-beta-D-glucosyl]n+m + reduced acceptor + O2 = 4-dehydro-beta-D-glucosyl-[(1-&gt;4)-beta-D-glucosyl]n-1 + [(1-&gt;4)-beta-D-glucosyl]m + acceptor + H2O.. Functionally, lytic polysaccharide monooxygenase (LPMO) that depolymerizes crystalline and amorphous polysaccharides via the oxidation of scissile alpha- or beta-(1-4)-glycosidic bonds, yielding C1 or C4 oxidation products. Catalysis by LPMOs requires the reduction of the active-site copper from Cu(II) to Cu(I) by a reducing agent and H(2)O(2) or O(2) as a cosubstrate. The polypeptide is AA9 family lytic polysaccharide monooxygenase I (Emericella nidulans (strain FGSC A4 / ATCC 38163 / CBS 112.46 / NRRL 194 / M139) (Aspergillus nidulans)).